The primary structure comprises 201 residues: Adapter protein MecA 1 (201 aa).

The protein belongs to the MecA family. In terms of assembly, homodimer.

Its function is as follows. Enables the recognition and targeting of unfolded and aggregated proteins to the ClpC protease or to other proteins involved in proteolysis. Acts negatively in the development of competence by binding ComK and recruiting it to the ClpCP protease. When overexpressed, inhibits sporulation. Also involved in Spx degradation by ClpC. The sequence is that of Adapter protein MecA 1 (mecA1) from Halalkalibacterium halodurans (strain ATCC BAA-125 / DSM 18197 / FERM 7344 / JCM 9153 / C-125) (Bacillus halodurans).